Here is a 189-residue protein sequence, read N- to C-terminus: Casparian strip membrane protein 1 (189 aa).

At 1–25 (MMQAESGSAEAKGPLPPPVGRKRRG) the chain is on the cytoplasmic side. A helical membrane pass occupies residues 26–46 (LGILDFLLRLLAIGATLSAAI). The Extracellular segment spans residues 47-73 (TMGTTNETLQFFTQFFQFKARFYDLSA). N-linked (GlcNAc...) asparagine glycosylation occurs at Asn52. A helical transmembrane segment spans residues 74–94 (FIYFVIANAIVGGYLLLSLPI). The Cytoplasmic portion of the chain corresponds to 95 to 108 (SILNIVRPRAASSR). The chain crosses the membrane as a helical span at residues 109–129 (VFLIFFDTVMVAVCTSGAAAA). Topologically, residues 130–158 (VAILYVARKGNSRTNWFAICQRFNSFCNQ) are extracellular. Residues 159 to 179 (AIGAVSASFAGVVFLILLVLL) form a helical membrane-spanning segment. Over 180 to 189 (SASTLYRRRP) the chain is Cytoplasmic.

It belongs to the Casparian strip membrane proteins (CASP) family. Homodimer and heterodimers.

It is found in the cell membrane. Functionally, regulates membrane-cell wall junctions and localized cell wall deposition. Required for establishment of the Casparian strip membrane domain (CSD) and the subsequent formation of Casparian strips, a cell wall modification of the root endodermis that determines an apoplastic barrier between the intraorganismal apoplasm and the extraorganismal apoplasm and prevents lateral diffusion. In Picea glauca (White spruce), this protein is Casparian strip membrane protein 1.